The sequence spans 214 residues: Urease accessory protein UreG (214 aa).

Position 23-30 (23-30 (GPVGSGKT)) interacts with GTP.

Belongs to the SIMIBI class G3E GTPase family. UreG subfamily. Homodimer. UreD, UreF and UreG form a complex that acts as a GTP-hydrolysis-dependent molecular chaperone, activating the urease apoprotein by helping to assemble the nickel containing metallocenter of UreC. The UreE protein probably delivers the nickel.

The protein localises to the cytoplasm. Facilitates the functional incorporation of the urease nickel metallocenter. This process requires GTP hydrolysis, probably effectuated by UreG. The chain is Urease accessory protein UreG from Bordetella pertussis (strain Tohama I / ATCC BAA-589 / NCTC 13251).